We begin with the raw amino-acid sequence, 1373 residues long: Disease resistance protein RRS1 (1373 aa).

Residues 5-146 (EKDEEFVCIS…EIVRDVYETH (142 aa)) form the TIR domain. The NB-ARC domain occupies 170–421 (IGIRCVGIWG…LLEGCGFFPH (252 aa)). ATP is bound at residue 179-186 (GMPGIGKT). 9 LRR repeats span residues 498 to 522 (SEEI…AFKN), 535 to 553 (NPEV…HSLP), 554 to 575 (NELR…NFDP), 577 to 598 (HLVE…TKNL), 621 to 646 (AENL…RLLR), 665 to 688 (PPNI…TVKP), 742 to 766 (LPNM…SIQG), 768 to 793 (PRFL…SLEI), and 831 to 854 (PRNL…PLSL). The Nuclear localization signal motif lies at 988–1005 (RNFHCWAPGKVVPKVRKD). The WRKY DNA-binding region spans 1204 to 1272 (IPAIDEGDLW…YLSEHNHPRP (69 aa)). The tract at residues 1300–1323 (RVFQNKDEPNKPHLPSSSTPPGNA) is disordered.

Interacts with PopP2, a R.solanacearum type III effector.

It is found in the nucleus. In terms of biological role, transcription factor. Interacts specifically with the W box (5'-(T)TGAC[CT]-3'), a frequently occurring elicitor-responsive cis-acting element. Also acts as a disease resistance protein involved in resistance to fungal and bacterial pathogens, including R.solanacearum, P.syringae pv. tomato and C.higginsianum. The chain is Disease resistance protein RRS1 from Arabidopsis thaliana (Mouse-ear cress).